The chain runs to 205 residues: Proteasome subunit beta type-3 (205 aa).

N-acetylserine is present on Ser-2. The residue at position 77 (Lys-77) is an N6-acetyllysine.

It belongs to the peptidase T1B family. As to quaternary structure, the 26S proteasome consists of a 20S proteasome core and two 19S regulatory subunits. The 20S proteasome core is a barrel-shaped complex made of 28 subunits that are arranged in four stacked rings. The two outer rings are each formed by seven alpha subunits, and the two inner rings are formed by seven beta subunits. The proteolytic activity is exerted by three beta-subunits PSMB5, PSMB6 and PSMB7.

The protein resides in the cytoplasm. It localises to the nucleus. In terms of biological role, non-catalytic component of the 20S core proteasome complex involved in the proteolytic degradation of most intracellular proteins. This complex plays numerous essential roles within the cell by associating with different regulatory particles. Associated with two 19S regulatory particles, forms the 26S proteasome and thus participates in the ATP-dependent degradation of ubiquitinated proteins. The 26S proteasome plays a key role in the maintenance of protein homeostasis by removing misfolded or damaged proteins that could impair cellular functions, and by removing proteins whose functions are no longer required. Associated with the PA200 or PA28, the 20S proteasome mediates ubiquitin-independent protein degradation. This type of proteolysis is required in several pathways including spermatogenesis (20S-PA200 complex) or generation of a subset of MHC class I-presented antigenic peptides (20S-PA28 complex). This chain is Proteasome subunit beta type-3 (Psmb3), found in Rattus norvegicus (Rat).